The following is a 193-amino-acid chain: NADH-quinone oxidoreductase subunit B (193 aa).

[4Fe-4S] cluster is bound by residues Cys-72, Cys-73, Cys-137, and Cys-167.

It belongs to the complex I 20 kDa subunit family. NDH-1 is composed of 14 different subunits. Subunits NuoB, C, D, E, F, and G constitute the peripheral sector of the complex. [4Fe-4S] cluster is required as a cofactor.

The protein resides in the cell inner membrane. It catalyses the reaction a quinone + NADH + 5 H(+)(in) = a quinol + NAD(+) + 4 H(+)(out). In terms of biological role, NDH-1 shuttles electrons from NADH, via FMN and iron-sulfur (Fe-S) centers, to quinones in the respiratory chain. The immediate electron acceptor for the enzyme in this species is believed to be ubiquinone. Couples the redox reaction to proton translocation (for every two electrons transferred, four hydrogen ions are translocated across the cytoplasmic membrane), and thus conserves the redox energy in a proton gradient. In Rhizobium rhizogenes (strain K84 / ATCC BAA-868) (Agrobacterium radiobacter), this protein is NADH-quinone oxidoreductase subunit B.